Here is an 86-residue protein sequence, read N- to C-terminus: uncharacterized protein (86 aa).

This is an uncharacterized protein from Archaeoglobus fulgidus (strain ATCC 49558 / DSM 4304 / JCM 9628 / NBRC 100126 / VC-16).